The primary structure comprises 178 residues: ATP-dependent protease subunit HslV (178 aa).

Thr-7 is an active-site residue. Na(+)-binding residues include Gly-162, Cys-165, and Thr-168.

Belongs to the peptidase T1B family. HslV subfamily. As to quaternary structure, a double ring-shaped homohexamer of HslV is capped on each side by a ring-shaped HslU homohexamer. The assembly of the HslU/HslV complex is dependent on binding of ATP.

Its subcellular location is the cytoplasm. It carries out the reaction ATP-dependent cleavage of peptide bonds with broad specificity.. Its activity is regulated as follows. Allosterically activated by HslU binding. Functionally, protease subunit of a proteasome-like degradation complex believed to be a general protein degrading machinery. This is ATP-dependent protease subunit HslV from Sulfurihydrogenibium sp. (strain YO3AOP1).